Reading from the N-terminus, the 95-residue chain is Aspartyl/glutamyl-tRNA(Asn/Gln) amidotransferase subunit C (95 aa).

Belongs to the GatC family. As to quaternary structure, heterotrimer of A, B and C subunits.

It catalyses the reaction L-glutamyl-tRNA(Gln) + L-glutamine + ATP + H2O = L-glutaminyl-tRNA(Gln) + L-glutamate + ADP + phosphate + H(+). The enzyme catalyses L-aspartyl-tRNA(Asn) + L-glutamine + ATP + H2O = L-asparaginyl-tRNA(Asn) + L-glutamate + ADP + phosphate + 2 H(+). In terms of biological role, allows the formation of correctly charged Asn-tRNA(Asn) or Gln-tRNA(Gln) through the transamidation of misacylated Asp-tRNA(Asn) or Glu-tRNA(Gln) in organisms which lack either or both of asparaginyl-tRNA or glutaminyl-tRNA synthetases. The reaction takes place in the presence of glutamine and ATP through an activated phospho-Asp-tRNA(Asn) or phospho-Glu-tRNA(Gln). The chain is Aspartyl/glutamyl-tRNA(Asn/Gln) amidotransferase subunit C from Geotalea uraniireducens (strain Rf4) (Geobacter uraniireducens).